Consider the following 2176-residue polypeptide: Protein eyes shut (2176 aa).

The Cytoplasmic portion of the chain corresponds to 1–122 (MSNVHQFDTQ…NPNILLPTLR (122 aa)). The chain crosses the membrane as a helical span at residues 123 to 143 (ILARGLLLPALILAILVGSSQ). Residues 144–180 (AGFACLSNPCVFGVCIDGLNSSYSCYCIDGYTGIQCQ) form the EGF-like 1 domain. The Extracellular portion of the chain corresponds to 144–2176 (AGFACLSNPC…DLHGDEPLTV (2033 aa)). 21 cysteine pairs are disulfide-bonded: C148–C158, C153–C168, C170–C179, C186–C197, C191–C206, C208–C217, C224–C235, C229–C244, C246–C255, C262–C276, C270–C286, C288–C297, C304–C315, C309–C324, C326–C335, C342–C353, C347–C362, C364–C373, C380–C392, C386–C401, and C403–C412. N163 carries an N-linked (GlcNAc...) asparagine glycan. An EGF-like 2; calcium-binding domain is found at 182–218 (NWDECWSSPCQNGGTCVDGVAYYNCTCPEGFSGSNCE). N205 carries N-linked (GlcNAc...) asparagine glycosylation. The EGF-like 3; calcium-binding domain occupies 220-256 (NVDECMSNPCQNGGLCRDRTNGYICTCQPGYLGSHCE). One can recognise an EGF-like 4 domain in the interval 258–298 (DVAVCETGTGARCQHGGECIEGPGLEFTCDCPAGWHGRICQ). The region spanning 300–336 (EINECASSPCQNGGVCVDKLAAYACACPMGYTGINCE) is the EGF-like 5; calcium-binding domain. The EGF-like 6 domain maps to 338–374 (EILICADNPCQNNALCLMEEGVPTCYCVPDYHGEKCE). The EGF-like 7; calcium-binding domain occupies 376–413 (QYDECQLGPRCMNGGVCIDGVDTFSCSCPPLLTGMLCE). N425 is a glycosylation site (N-linked (GlcNAc...) asparagine). Low complexity-rich tracts occupy residues 429–447 (PATQSPPRRTTTTSTMAPP) and 482–502 (VTSVLSPSSSSSSSEEGVSVE). Disordered regions lie at residues 429–465 (PATQSPPRRTTTTSTMAPPTVRPVTPPETTVSPSRAS), 482–639 (VTSV…RPTA), 757–783 (RFTTVQPPAGVTTTSPTEDSSVELPTP), 802–854 (LITT…VEIT), and 902–1014 (APPA…GVPE). A compositionally biased stretch (polar residues) spans 514-526 (GSHSISVEQTTAV). Acidic residues predominate over residues 548 to 560 (SASESETETEEEI). Low complexity-rich tracts occupy residues 564–582 (TTARPPTSRSSSSSEESPS) and 596–632 (TSASSESSGEVVTSEEYTTVPHFEVSGSKSESGSEEV). A compositionally biased stretch (polar residues) spans 757-775 (RFTTVQPPAGVTTTSPTED). Basic residues predominate over residues 811 to 820 (THHHHHHHPH). Composition is skewed to pro residues over residues 904–922 (PATPAPVPPATTTPPPSPP) and 930–955 (TLPPTLPPVTLPPVTQPPPTIPPTPP). The region spanning 1018–1054 (GDVDCIKLGCYNGGTCVTTSEGSRCVCRFDRQGPLCE) is the EGF-like 8 domain. Cystine bridges form between C1022/C1033, C1027/C1042, and C1044/C1053. The Laminin G-like 1 domain occupies 1059–1266 (IRNAAFSGDS…GITECGSLAC (208 aa)). N-linked (GlcNAc...) asparagine glycosylation is found at N1165, N1170, and N1176. The EGF-like 9 domain occupies 1309–1346 (EISVCEDNPCQYGGTCVQFPGSGYLCLCPLGKHGHYCE). Intrachain disulfides connect C1313/C1324, C1318/C1334, and C1336/C1345. A Laminin G-like 2 domain is found at 1353–1549 (LPSFSGSVNG…GVGQCGTREC (197 aa)). Residue N1471 is glycosylated (N-linked (GlcNAc...) asparagine). EGF-like domains follow at residues 1545-1581 (GTRECHRHACQHDGACLQHGATFTCICQEGWYGPLCA) and 1583-1621 (PTNPCDSFNNKCYEDATCVPLVNGYECDCPVGRTGKNCE). 6 disulfide bridges follow: C1549/C1560, C1554/C1569, C1571/C1580, C1587/C1600, C1594/C1609, and C1611/C1620. Residues N1665 and N1861 are each glycosylated (N-linked (GlcNAc...) asparagine). The Laminin G-like 3 domain occupies 1692 to 1879 (EKQRSFSPVP…NIRDCDGTAC (188 aa)). EGF-like domains lie at 1875 to 1912 (DGTACGGDSCESGGHCWLDEKLQPHCICPEYAKGDRCE) and 1913 to 1946 (YSETCKLIPCKNNGRCLRSGRCSCPNGWGGFYCE). 6 disulfide bridges follow: C1879-C1890, C1884-C1900, C1902-C1911, C1917-C1928, C1922-C1934, and C1936-C1945. In terms of domain architecture, Laminin G-like 4 spans 1952–2166 (PTTPSFRGNS…TYQGENIGSC (215 aa)). N-linked (GlcNAc...) asparagine glycosylation is found at N1994, N2035, and N2099. The segment at 2080–2101 (GGRSLGSTTPRSTLAGRRKNSS) is disordered.

This sequence belongs to the EYS family. Expressed from the beginning of rhabdomere biogenesis (48 hours after pupal formation), when it decorates the entire photoreceptor apical surface.

It is found in the membrane. Its subcellular location is the secreted. Functionally, essential for the formation of matrix-filled interrhabdomeral space: critical for the formation of epithelial lumina in the retina. Acts together with prominin (prom) and the cell adhesion molecule chaoptin (chp) to choreograph the partitioning of rhabdomeres into an open system. In Drosophila melanogaster (Fruit fly), this protein is Protein eyes shut.